The sequence spans 254 residues: Galactitol 2-dehydrogenase (L-tagatose-forming) (254 aa).

NAD(+)-binding positions include 21 to 23 (SGI), Asp42, 66 to 67 (DV), Tyr159, Lys163, and 192 to 194 (VAT). The active-site Proton acceptor is Tyr159. Trp254 is a Mg(2+) binding site.

Belongs to the short-chain dehydrogenases/reductases (SDR) family. In terms of assembly, homotetramer. Requires a divalent metal cation as cofactor.

The enzyme catalyses galactitol + NAD(+) = keto-L-tagatose + NADH + H(+). Its activity is regulated as follows. Inhibited by the chelating agents EDTA and alpha,alpha'-dipyridyl. Inhibited by Zn(2+) and Fe(2+). In terms of biological role, catalyzes the interconversion of galactitol to the rare sugar L-tagatose. Shows activity with a wide range of substrates, and catalyzes the oxidation of a variety of polyvalent aliphatic alcohols and polyols to the corresponding ketones and ketoses, respectively, and in the reverse reaction, it reduces ketones with high stereoselectivity yielding the corresponding S-configurated alcohols. Shows high activity with D-threitol, xylitol, 1,2-hexanediol, 1,2-pentanediol, 2-hexanol, L-erythrulose, D-ribulose and acetoin. Specific for NAD(+). The sequence is that of Galactitol 2-dehydrogenase (L-tagatose-forming) from Cereibacter sphaeroides (Rhodobacter sphaeroides).